Reading from the N-terminus, the 185-residue chain is Ribosome-recycling factor (185 aa).

It belongs to the RRF family.

The protein resides in the cytoplasm. In terms of biological role, responsible for the release of ribosomes from messenger RNA at the termination of protein biosynthesis. May increase the efficiency of translation by recycling ribosomes from one round of translation to another. The polypeptide is Ribosome-recycling factor (Francisella philomiragia subsp. philomiragia (strain ATCC 25017 / CCUG 19701 / FSC 153 / O#319-036)).